The primary structure comprises 196 residues: uncharacterized protein (196 aa).

This sequence belongs to the flavoredoxin family. FMN serves as cofactor.

This is an uncharacterized protein from Aquifex aeolicus (strain VF5).